The following is a 987-amino-acid chain: uncharacterized protein (987 aa).

2 consecutive transmembrane segments (helical) span residues 12-32 and 958-978; these read FIYL…SVSG and VENN…LGIL.

This sequence to M.jannaschii MJ1393 and A.fulgidus AF2028.

It localises to the cell membrane. This is an uncharacterized protein from Methanocaldococcus jannaschii (strain ATCC 43067 / DSM 2661 / JAL-1 / JCM 10045 / NBRC 100440) (Methanococcus jannaschii).